The following is a 175-amino-acid chain: Sec-independent protein translocase protein TatB (175 aa).

The helical transmembrane segment at 1–21 (MLDLGLSKMALIGVVALVVLG) threads the bilayer. A compositionally biased stretch (low complexity) spans 96–115 (VSPGGSAAADAPDGPSAASG). 2 disordered regions span residues 96 to 119 (VSPGGSAAADAPDGPSAASGEPSW) and 152 to 175 (QVQSGAARVARHRPASLRRPARFL). A compositionally biased stretch (basic residues) spans 160-175 (VARHRPASLRRPARFL).

The protein belongs to the TatB family. In terms of assembly, the Tat system comprises two distinct complexes: a TatABC complex, containing multiple copies of TatA, TatB and TatC subunits, and a separate TatA complex, containing only TatA subunits. Substrates initially bind to the TatABC complex, which probably triggers association of the separate TatA complex to form the active translocon.

It localises to the cell inner membrane. Its function is as follows. Part of the twin-arginine translocation (Tat) system that transports large folded proteins containing a characteristic twin-arginine motif in their signal peptide across membranes. Together with TatC, TatB is part of a receptor directly interacting with Tat signal peptides. TatB may form an oligomeric binding site that transiently accommodates folded Tat precursor proteins before their translocation. The polypeptide is Sec-independent protein translocase protein TatB (Burkholderia pseudomallei (strain 1710b)).